We begin with the raw amino-acid sequence, 274 residues long: Factor H binding protein (274 aa).

An N-terminal signal peptide occupies residues 1–19 (MNRTAFCCLSLTTALILTA). The N-palmitoyl cysteine moiety is linked to residue Cys20. Cys20 carries S-diacylglycerol cysteine lipidation. The domain A stretch occupies residues 27–119 (VAADIGAGLA…LESGEFQVYK (93 aa)). The domain B stretch occupies residues 120-183 (QSHSALTAFQ…TAFGSDDAGG (64 aa)). Residues 184–274 (KLTYTIDFAA…IRHIGLAAKQ (91 aa)) form a domain C region.

The protein belongs to the factor H binding-protein family. In terms of assembly, binds to host factor H (fH from human). Both fHbp beta-barrels contact Sushi domains 6 and 7 in fH (also called complement control protein domains, CCP). This interaction probably mimics the normal (carbohydrate-dependent) mode of fH recruitement, regulating fH activity. Sucrose octasulphate inhibits the fHbp-fH interaction. In terms of processing, protein is lipidated in N.meningitidis upon growth in radioactive palmitic acid, probably on Cys-20.

It localises to the cell outer membrane. The protein localises to the secreted. It is found in the extracellular vesicle. The protein resides in the bacterial extracellular vesicle. Its function is as follows. A bacterial surface lipoprotein that binds host (human) complement factor H (fH, gene CFH), binding contributes to the avoidance of complement-mediated lysis by N.meningitidis. Binding of fH to the bacteria surface is independent of bacterial sialic acid moieties. fH binding affinity is high enough that it may sequester plasma fH, depleting its circulating levels and de-regulating complement in the host. This protein induces high levels of bactericidal antibodies in mice. This chain is Factor H binding protein (fhbP), found in Neisseria meningitidis serogroup B (strain ATCC BAA-335 / MC58).